Reading from the N-terminus, the 447-residue chain is UDP-N-acetylmuramate--L-alanine ligase (447 aa).

Residue 108-114 participates in ATP binding; that stretch reads GSHGKTS.

This sequence belongs to the MurCDEF family.

The protein resides in the cytoplasm. The catalysed reaction is UDP-N-acetyl-alpha-D-muramate + L-alanine + ATP = UDP-N-acetyl-alpha-D-muramoyl-L-alanine + ADP + phosphate + H(+). It participates in cell wall biogenesis; peptidoglycan biosynthesis. Functionally, cell wall formation. The chain is UDP-N-acetylmuramate--L-alanine ligase from Listeria welshimeri serovar 6b (strain ATCC 35897 / DSM 20650 / CCUG 15529 / CIP 8149 / NCTC 11857 / SLCC 5334 / V8).